Consider the following 232-residue polypeptide: U2 small nuclear ribonucleoprotein B'' (232 aa).

The RRM 1 domain occupies 10–89; it reads QTVYLRNLNE…KRMRVQYAKT (80 aa). Residues 92–159 form a disordered region; it reads DCLATEDGST…QEPPAPPNNI (68 aa). Over residues 108–123 the composition is skewed to basic and acidic residues; sequence KKQEEKAAEKKRRAEE. A compositionally biased stretch (polar residues) spans 127–151; that stretch reads SGPNAAAQSNGTGYQASRLGKTSQE. Residues 158–232 form the RRM 2 domain; the sequence is NILFIQNLPA…NPMAISYAKK (75 aa).

The protein belongs to the RRM U1 A/B'' family. As to quaternary structure, component of the spliceosome where it is associated with snRNP U2.

It is found in the nucleus. The protein resides in the cajal body. The protein localises to the nucleoplasm. Its subcellular location is the cytoplasm. Its function is as follows. Involved in nuclear pre-mRNA splicing. This is U2 small nuclear ribonucleoprotein B'' from Oryza sativa subsp. indica (Rice).